We begin with the raw amino-acid sequence, 785 residues long: Uncoating factor OPG117 (785 aa).

D170 is a catalytic residue. Residues T342–Q469 form a primase region. One can recognise an SF3 helicase domain in the interval K477 to A639. Residue G503 to S510 participates in ATP binding.

It belongs to the orthopoxvirus OPG117 family. Homomultimer; hexamer. Interacts with OPG148.

Its subcellular location is the host cytoplasm. Its function is as follows. Multifunctional protein required for genome uncoating and replication. Major viral uncoating protein that is required for the release of the viral genome from incoming viral cores containing the viral DNA genome. Possesses an ATPase activity that is required for hexamerization and uncoating. This Bos taurus (Bovine) protein is Uncoating factor OPG117 (OPG117).